The sequence spans 209 residues: FMN-dependent NADH:quinone oxidoreductase (209 aa).

FMN-binding positions include Ser9, 19–21 (SVS), and 143–146 (TRGG).

The protein belongs to the azoreductase type 1 family. Homodimer. FMN serves as cofactor.

The enzyme catalyses 2 a quinone + NADH + H(+) = 2 a 1,4-benzosemiquinone + NAD(+). The catalysed reaction is N,N-dimethyl-1,4-phenylenediamine + anthranilate + 2 NAD(+) = 2-(4-dimethylaminophenyl)diazenylbenzoate + 2 NADH + 2 H(+). Quinone reductase that provides resistance to thiol-specific stress caused by electrophilic quinones. Its function is as follows. Also exhibits azoreductase activity. Catalyzes the reductive cleavage of the azo bond in aromatic azo compounds to the corresponding amines. This is FMN-dependent NADH:quinone oxidoreductase from Leptothrix cholodnii (strain ATCC 51168 / LMG 8142 / SP-6) (Leptothrix discophora (strain SP-6)).